A 269-amino-acid chain; its full sequence is Tryptophan synthase alpha chain (269 aa).

Active-site proton acceptor residues include glutamate 56 and aspartate 67.

Belongs to the TrpA family. As to quaternary structure, tetramer of two alpha and two beta chains.

The enzyme catalyses (1S,2R)-1-C-(indol-3-yl)glycerol 3-phosphate + L-serine = D-glyceraldehyde 3-phosphate + L-tryptophan + H2O. It participates in amino-acid biosynthesis; L-tryptophan biosynthesis; L-tryptophan from chorismate: step 5/5. Its function is as follows. The alpha subunit is responsible for the aldol cleavage of indoleglycerol phosphate to indole and glyceraldehyde 3-phosphate. The protein is Tryptophan synthase alpha chain of Mycobacterium ulcerans (strain Agy99).